Here is a 508-residue protein sequence, read N- to C-terminus: Photosystem II CP47 reaction center protein (508 aa).

Helical transmembrane passes span 21–36, 101–115, 140–156, 203–218, 237–252, and 457–472; these read AVHI…WAGS, IVFS…IWHW, GIHL…FGAF, IAAG…FHLS, VLSS…AFVV, and SFAL…HGAR.

This sequence belongs to the PsbB/PsbC family. PsbB subfamily. In terms of assembly, PSII is composed of 1 copy each of membrane proteins PsbA, PsbB, PsbC, PsbD, PsbE, PsbF, PsbH, PsbI, PsbJ, PsbK, PsbL, PsbM, PsbT, PsbX, PsbY, PsbZ, Psb30/Ycf12, at least 3 peripheral proteins of the oxygen-evolving complex and a large number of cofactors. It forms dimeric complexes. Binds multiple chlorophylls. PSII binds additional chlorophylls, carotenoids and specific lipids. serves as cofactor.

It localises to the plastid. Its subcellular location is the chloroplast thylakoid membrane. In terms of biological role, one of the components of the core complex of photosystem II (PSII). It binds chlorophyll and helps catalyze the primary light-induced photochemical processes of PSII. PSII is a light-driven water:plastoquinone oxidoreductase, using light energy to abstract electrons from H(2)O, generating O(2) and a proton gradient subsequently used for ATP formation. This chain is Photosystem II CP47 reaction center protein, found in Daucus carota (Wild carrot).